A 171-amino-acid chain; its full sequence is Inosine/xanthosine triphosphatase (171 aa).

8–13 (TTNPAK) provides a ligand contact to substrate. Mg(2+) is bound by residues Asp-38 and Gln-68.

The protein belongs to the YjjX NTPase family. In terms of assembly, homodimer. Mg(2+) is required as a cofactor. Requires Mn(2+) as cofactor.

It carries out the reaction XTP + H2O = XDP + phosphate + H(+). The catalysed reaction is ITP + H2O = IDP + phosphate + H(+). Functionally, phosphatase that hydrolyzes non-canonical purine nucleotides such as XTP and ITP to their respective diphosphate derivatives. Probably excludes non-canonical purines from DNA/RNA precursor pool, thus preventing their incorporation into DNA/RNA and avoiding chromosomal lesions. The chain is Inosine/xanthosine triphosphatase from Cronobacter sakazakii (strain ATCC BAA-894) (Enterobacter sakazakii).